The chain runs to 285 residues: Tumor necrosis factor ligand superfamily member 13B (285 aa).

Residues 1-46 (MDDSTEREQSRLTSCLKKREEMKLKECVSILPRKESPSVRSSKDGK) are Cytoplasmic-facing. A helical; Signal-anchor for type II membrane protein membrane pass occupies residues 47–67 (LLAATLLLALLSCCLTVVSFY). Residues 68–285 (QVAALQGDLA…VTFFGALKLL (218 aa)) lie on the Extracellular side of the membrane. A disordered region spans residues 114–138 (IFEPPAPGEGNSSQNSRNKRAVQGP). Residue asparagine 124 is glycosylated (N-linked (GlcNAc...) asparagine). One can recognise a THD domain in the interval 145-284 (DCLQLIADSE…DVTFFGALKL (140 aa)). An intrachain disulfide couples cysteine 232 to cysteine 245. N-linked (GlcNAc...) (high mannose) asparagine glycosylation is present at asparagine 242.

Belongs to the tumor necrosis factor family. In terms of assembly, homotrimer. Isoform 2 heteromultimerizes with isoform 1, probably limiting the amount of functional isoform 1 on the cell surface. Isoform 3 is unlikely form trimers or bind to BAFF receptors. In terms of processing, the soluble form derives from the membrane form by proteolytic processing. Isoform 2 is not efficiently shed from the membrane unlike isoform 1. Post-translationally, N-glycosylated. Abundantly expressed in peripheral blood Leukocytes and is specifically expressed in monocytes and macrophages. Also found in the spleen, lymph node, bone marrow, T-cells and dendritic cells. A lower expression seen in placenta, heart, lung, fetal liver, thymus, and pancreas. Isoform 2 is expressed in many myeloid cell lines.

The protein resides in the cell membrane. It localises to the secreted. In terms of biological role, cytokine that binds to TNFRSF13B/TACI and TNFRSF17/BCMA. TNFSF13/APRIL binds to the same 2 receptors. Together, they form a 2 ligands -2 receptors pathway involved in the stimulation of B- and T-cell function and the regulation of humoral immunity. A third B-cell specific BAFF-receptor (BAFFR/BR3) promotes the survival of mature B-cells and the B-cell response. Isoform 2 seems to inhibit isoform 1 secretion and bioactivity. Its function is as follows. Acts as a transcription factor for its own parent gene, in association with NF-kappa-B p50 subunit, at least in autoimmune and proliferative B-cell diseases. The presence of Delta4BAFF is essential for soluble BAFF release by IFNG/IFN-gamma-stimulated monocytes and for B-cell survival. It can directly or indirectly regulate the differential expression of a large number of genes involved in the innate immune response and the regulation of apoptosis. This is Tumor necrosis factor ligand superfamily member 13B (TNFSF13B) from Homo sapiens (Human).